Consider the following 641-residue polypeptide: Sodium-dependent nutrient amino acid transporter 1 (641 aa).

Over residues 1–21 (MELKNIEQQPQLQNGNGTATE) the composition is skewed to polar residues. A disordered region spans residues 1-37 (MELKNIEQQPQLQNGNGTATENNEKGEQKPTEGGERT). Residues 1–38 (MELKNIEQQPQLQNGNGTATENNEKGEQKPTEGGERTN) lie on the Cytoplasmic side of the membrane. Basic and acidic residues predominate over residues 22-35 (NNEKGEQKPTEGGE). 3 helical membrane passes run 39 to 59 (WGNGLEFLMSCISVSVGLGNV), 72 to 92 (GAFLIPYIIVLFLIGKPMYYL), and 125 to 145 (TVCIISYYSSLLALTLYYLFV). 3 N-linked (GlcNAc...) asparagine glycosylation sites follow: N181, N190, and N198. The next 9 membrane-spanning stretches (helical) occupy residues 229 to 249 (PDWKLTLALLVSWIVTFLVIM), 258 to 278 (AAYFLAIFPYVVLFVLLGRAV), 307 to 327 (AVVQCFFSLAVSCGPIIMFAS), 341 to 361 (IVTTLDTLTSLLGGITIFAIL), 401 to 421 (LFSVLFFFMLFVLGIGSIVAL), 441 to 461 (VALVTSICGFLLGLVYVTPGG), 474 to 494 (TYVVFILAIFELAGIVWIYGL), 516 to 536 (CWSFFTPVMMIIIFIYSMATI), and 552 to 572 (IAGWIVFAIGTAQFPLWGIWY).

Belongs to the sodium:neurotransmitter symporter (SNF) (TC 2.A.22) family.

Its subcellular location is the membrane. In terms of biological role, unusual broad substrate spectrum amino acid:sodium cotransporter that promotes absorption of the D isomers of essential amino acids. Neutral amino acids are the preferred substrates, especially methionine and phenylalanine. The protein is Sodium-dependent nutrient amino acid transporter 1 of Drosophila willistoni (Fruit fly).